A 94-amino-acid chain; its full sequence is Small ribosomal subunit protein bS18 (94 aa).

This sequence belongs to the bacterial ribosomal protein bS18 family. Part of the 30S ribosomal subunit. Forms a tight heterodimer with protein bS6.

Its function is as follows. Binds as a heterodimer with protein bS6 to the central domain of the 16S rRNA, where it helps stabilize the platform of the 30S subunit. This is Small ribosomal subunit protein bS18 from Rickettsia bellii (strain OSU 85-389).